We begin with the raw amino-acid sequence, 341 residues long: Phosphate acyltransferase (341 aa).

This sequence belongs to the PlsX family. In terms of assembly, homodimer. Probably interacts with PlsY.

The protein localises to the cytoplasm. It carries out the reaction a fatty acyl-[ACP] + phosphate = an acyl phosphate + holo-[ACP]. It functions in the pathway lipid metabolism; phospholipid metabolism. Functionally, catalyzes the reversible formation of acyl-phosphate (acyl-PO(4)) from acyl-[acyl-carrier-protein] (acyl-ACP). This enzyme utilizes acyl-ACP as fatty acyl donor, but not acyl-CoA. The protein is Phosphate acyltransferase of Nostoc sp. (strain PCC 7120 / SAG 25.82 / UTEX 2576).